The sequence spans 267 residues: Putative transcription factor Ovo-like 1 (267 aa).

C2H2-type zinc fingers lie at residues 118-140, 146-168, 174-197, and 213-236; these read FTCH…MKCH, HLCT…VRTH, YKCS…KKIH, and YVCE…KERH.

As to expression, expressed in skin, testis, kidney and weakly in lung. Not detected in heart, brain, spleen, liver and skeletal muscle.

The protein localises to the nucleus. Putative transcription factor. Involved in hair formation and spermatogenesis. May function in the differentiation and/or maintenance of the urogenital system. This Mus musculus (Mouse) protein is Putative transcription factor Ovo-like 1 (Ovol1).